We begin with the raw amino-acid sequence, 151 residues long: Lipoprotein signal peptidase (151 aa).

Transmembrane regions (helical) follow at residues 54–74 (GQMW…IYLI) and 83–103 (LLKI…IDRL). Residues Asp110 and Asp125 contribute to the active site. A helical membrane pass occupies residues 120–140 (IFNIADSALTIGVGLFLLNIL).

The protein belongs to the peptidase A8 family.

Its subcellular location is the cell membrane. The enzyme catalyses Release of signal peptides from bacterial membrane prolipoproteins. Hydrolyzes -Xaa-Yaa-Zaa-|-(S,diacylglyceryl)Cys-, in which Xaa is hydrophobic (preferably Leu), and Yaa (Ala or Ser) and Zaa (Gly or Ala) have small, neutral side chains.. It participates in protein modification; lipoprotein biosynthesis (signal peptide cleavage). This protein specifically catalyzes the removal of signal peptides from prolipoproteins. In Shouchella clausii (strain KSM-K16) (Alkalihalobacillus clausii), this protein is Lipoprotein signal peptidase.